Consider the following 846-residue polypeptide: Enhancer of polycomb-like protein 1 (846 aa).

Disordered regions lie at residues 169–204, 391–466, 587–607, 682–702, and 759–804; these read FNSKAEGSSGDVKSDKEQGRGMRVKGKDREKEKGDA, TSDE…APDA, EKKRPRSIDEVEEEMQEQSPK, AADAKPPPAPIFQKPPAPQPN, and QVQA…GVKQ. The span at 180–203 shows a compositional bias: basic and acidic residues; sequence VKSDKEQGRGMRVKGKDREKEKGD. A compositionally biased stretch (polar residues) spans 411-426; sequence PSLSGQTPLTSGQSSS. Over residues 432 to 452 the composition is skewed to basic and acidic residues; sequence TDKDREERAQRERYDAQRNAE. The stretch at 434-490 forms a coiled coil; sequence KDREERAQRERYDAQRNAERSGILSGRSNAPDALKERLQALQQKTEEMLARKKEQDA. Positions 686 to 702 are enriched in pro residues; sequence KPPPAPIFQKPPAPQPN. A compositionally biased stretch (low complexity) spans 759-773; that stretch reads QVQAQGQGHPQAHLQ. A compositionally biased stretch (polar residues) spans 783–796; the sequence is NGVNSPMPNGQQML.

It belongs to the enhancer of polycomb family. As to quaternary structure, component of the NuA4 histone acetyltransferase complex.

It is found in the nucleus. Component of the NuA4 histone acetyltransferase complex which is involved in transcriptional activation of selected genes principally by acetylation of nucleosomal histone H4 and H2A. The NuA4 complex is also involved in DNA repair. Involved in gene silencing by neighboring heterochromatin, blockage of the silencing spreading along the chromosome, and required for cell cycle progression through G2/M. This Cryptococcus neoformans var. neoformans serotype D (strain JEC21 / ATCC MYA-565) (Filobasidiella neoformans) protein is Enhancer of polycomb-like protein 1 (EPL1).